The chain runs to 200 residues: Somatotropin (200 aa).

The first 22 residues, 1-22 (MARVLVLLSVVVASLLFSQGAT), serve as a signal peptide directing secretion. Residue histidine 38 coordinates Zn(2+). A disulfide bridge links cysteine 71 with cysteine 173. Glutamate 182 provides a ligand contact to Zn(2+). Cysteine 190 and cysteine 198 are disulfide-bonded.

This sequence belongs to the somatotropin/prolactin family.

The protein resides in the secreted. Its function is as follows. Growth hormone plays an important role in growth control and is involved in the regulation of several anabolic processes. Implicated as an osmoregulatory substance important for seawater adaptation. In Ictalurus punctatus (Channel catfish), this protein is Somatotropin (gh).